A 308-amino-acid polypeptide reads, in one-letter code: Membrane protein insertase YidC 1 (308 aa).

A signal peptide spans 1-22 (MKSIKRFALSAMGAAMLLVLTG). Cys23 carries the N-palmitoyl cysteine lipid modification. A lipid anchor (S-diacylglycerol cysteine) is attached at Cys23. Transmembrane regions (helical) follow at residues 60 to 80 (FGVA…PLGI), 135 to 155 (FGGV…AIYF), 168 to 188 (YLGI…GVLY), 211 to 225 (MIYM…FSLF), and 230 to 252 (VTLY…NYIV). The tract at residues 263-308 (ELAKNPSKASAFSTPSGRKDVTPEQPTAITSKKKHKNRNAGKQRSR) is disordered. Positions 269–278 (SKASAFSTPS) are enriched in polar residues. A compositionally biased stretch (basic residues) spans 293–308 (SKKKHKNRNAGKQRSR).

It belongs to the OXA1/ALB3/YidC family. Type 2 subfamily.

It is found in the cell membrane. Its function is as follows. Required for the insertion and/or proper folding and/or complex formation of integral membrane proteins into the membrane. Involved in integration of membrane proteins that insert both dependently and independently of the Sec translocase complex, as well as at least some lipoproteins. The chain is Membrane protein insertase YidC 1 from Streptococcus pneumoniae (strain ATCC BAA-255 / R6).